We begin with the raw amino-acid sequence, 99 residues long: C-C motif chemokine 8 (99 aa).

The first 23 residues, 1–23 (MKVSAGILCLLLVAATFGTQVLA), serve as a signal peptide directing secretion. Q24 is modified (pyrrolidone carboxylic acid). 2 cysteine pairs are disulfide-bonded: C34–C59 and C35–C75.

This sequence belongs to the intercrine beta (chemokine CC) family. Monomer or homodimer; in equilibrium.

It is found in the secreted. Functionally, chemotactic factor that attracts monocytes. This protein can bind heparin. This Bos taurus (Bovine) protein is C-C motif chemokine 8 (CCL8).